Reading from the N-terminus, the 1399-residue chain is DNA-directed RNA polymerase subunit beta' (1399 aa).

Zn(2+) is bound by residues C70, C72, C85, and C88. The Mg(2+) site is built by D460, D462, and D464. Zn(2+)-binding residues include C814, C888, C895, and C898.

Belongs to the RNA polymerase beta' chain family. The RNAP catalytic core consists of 2 alpha, 1 beta, 1 beta' and 1 omega subunit. When a sigma factor is associated with the core the holoenzyme is formed, which can initiate transcription. Mg(2+) serves as cofactor. The cofactor is Zn(2+).

The enzyme catalyses RNA(n) + a ribonucleoside 5'-triphosphate = RNA(n+1) + diphosphate. In terms of biological role, DNA-dependent RNA polymerase catalyzes the transcription of DNA into RNA using the four ribonucleoside triphosphates as substrates. The sequence is that of DNA-directed RNA polymerase subunit beta' from Pseudomonas fluorescens (strain Pf0-1).